A 417-amino-acid polypeptide reads, in one-letter code: Transmembrane protease serine 11G (417 aa).

Topologically, residues 1-21 (MYQPGILVRRKRVWKPWTVAL) are cytoplasmic. The helical; Signal-anchor for type II membrane protein transmembrane segment at 22 to 42 (ITVALLLALAVLIGLLVYFLV) threads the bilayer. Residues 43-417 (YDEKTHYYQA…RDWIKSKTSI (375 aa)) lie on the Extracellular side of the membrane. Residues 46-165 (KTHYYQASFW…PYLREMNAAQ (120 aa)) form the SEA domain. Asparagine 60 carries N-linked (GlcNAc...) asparagine glycosylation. Residues 186 to 416 (IADGKPADKA…YRDWIKSKTS (231 aa)) form the Peptidase S1 domain. The cysteines at positions 211 and 227 are disulfide-linked. Residues histidine 226 and aspartate 271 each act as charge relay system in the active site. 2 disulfides stabilise this stretch: cysteine 336–cysteine 352 and cysteine 363–cysteine 392. Serine 367 (charge relay system) is an active-site residue.

Belongs to the peptidase S1 family.

It is found in the membrane. This is Transmembrane protease serine 11G (Tmprss11g) from Mus musculus (Mouse).